The sequence spans 124 residues: Large ribosomal subunit protein uL18 (124 aa).

The protein belongs to the universal ribosomal protein uL18 family. Part of the 50S ribosomal subunit; part of the 5S rRNA/L5/L18/L25 subcomplex. Contacts the 5S and 23S rRNAs.

Functionally, this is one of the proteins that bind and probably mediate the attachment of the 5S RNA into the large ribosomal subunit, where it forms part of the central protuberance. The polypeptide is Large ribosomal subunit protein uL18 (Caldicellulosiruptor saccharolyticus (strain ATCC 43494 / DSM 8903 / Tp8T 6331)).